A 387-amino-acid polypeptide reads, in one-letter code: Succinate--CoA ligase [ADP-forming] subunit beta (387 aa).

Positions 9 to 236 constitute an ATP-grasp domain; the sequence is KELFAKHNVP…RAATDPLELK (228 aa). ATP contacts are provided by residues Lys45, 52–54, Ser94, and Glu99; that span reads GRG. Asn191 and Asp205 together coordinate Mg(2+). Residues Asn256 and 318 to 320 contribute to the substrate site; that span reads GIT.

Belongs to the succinate/malate CoA ligase beta subunit family. In terms of assembly, heterotetramer of two alpha and two beta subunits. Mg(2+) serves as cofactor.

It catalyses the reaction succinate + ATP + CoA = succinyl-CoA + ADP + phosphate. It carries out the reaction GTP + succinate + CoA = succinyl-CoA + GDP + phosphate. It participates in carbohydrate metabolism; tricarboxylic acid cycle; succinate from succinyl-CoA (ligase route): step 1/1. In terms of biological role, succinyl-CoA synthetase functions in the citric acid cycle (TCA), coupling the hydrolysis of succinyl-CoA to the synthesis of either ATP or GTP and thus represents the only step of substrate-level phosphorylation in the TCA. The beta subunit provides nucleotide specificity of the enzyme and binds the substrate succinate, while the binding sites for coenzyme A and phosphate are found in the alpha subunit. The polypeptide is Succinate--CoA ligase [ADP-forming] subunit beta (Mycobacterium bovis (strain ATCC BAA-935 / AF2122/97)).